A 126-amino-acid polypeptide reads, in one-letter code: Small ribosomal subunit protein uS12 (126 aa).

Positions 1–26 (MPTINQLVRKGRASETTKSKSPALQD) are disordered. Residue aspartate 89 is modified to 3-methylthioaspartic acid. The tract at residues 101 to 126 (SLDTQGVKDRKQARSKYGAKRAKAAK) is disordered. Residues 113–126 (ARSKYGAKRAKAAK) show a composition bias toward basic residues.

Belongs to the universal ribosomal protein uS12 family. In terms of assembly, part of the 30S ribosomal subunit. Contacts proteins S8 and S17. May interact with IF1 in the 30S initiation complex.

Functionally, with S4 and S5 plays an important role in translational accuracy. Its function is as follows. Interacts with and stabilizes bases of the 16S rRNA that are involved in tRNA selection in the A site and with the mRNA backbone. Located at the interface of the 30S and 50S subunits, it traverses the body of the 30S subunit contacting proteins on the other side and probably holding the rRNA structure together. The combined cluster of proteins S8, S12 and S17 appears to hold together the shoulder and platform of the 30S subunit. This Burkholderia pseudomallei (strain 1106a) protein is Small ribosomal subunit protein uS12.